Reading from the N-terminus, the 1286-residue chain is 5-oxoprolinase (1286 aa).

Phosphoserine is present on residues serine 930 and serine 1077.

This sequence belongs to the oxoprolinase family. In terms of assembly, homodimer.

It is found in the cytoplasm. It carries out the reaction 5-oxo-L-proline + ATP + 2 H2O = L-glutamate + ADP + phosphate + H(+). Functionally, catalyzes the cleavage of 5-oxo-L-proline to form L-glutamate coupled to the hydrolysis of ATP to ADP and inorganic phosphate. The chain is 5-oxoprolinase (OXP1) from Saccharomyces cerevisiae (strain ATCC 204508 / S288c) (Baker's yeast).